Consider the following 633-residue polypeptide: Phosphomethylpyrimidine synthase (633 aa).

Substrate-binding positions include Asn-245, Met-274, Tyr-303, His-339, 359–361 (SRG), 400–403 (DGLR), and Glu-439. Position 443 (His-443) interacts with Zn(2+). A substrate-binding site is contributed by Tyr-466. Zn(2+) is bound at residue His-507. Cys-587, Cys-590, and Cys-595 together coordinate [4Fe-4S] cluster.

The protein belongs to the ThiC family. As to quaternary structure, homodimer. [4Fe-4S] cluster serves as cofactor.

The catalysed reaction is 5-amino-1-(5-phospho-beta-D-ribosyl)imidazole + S-adenosyl-L-methionine = 4-amino-2-methyl-5-(phosphooxymethyl)pyrimidine + CO + 5'-deoxyadenosine + formate + L-methionine + 3 H(+). It participates in cofactor biosynthesis; thiamine diphosphate biosynthesis. Catalyzes the synthesis of the hydroxymethylpyrimidine phosphate (HMP-P) moiety of thiamine from aminoimidazole ribotide (AIR) in a radical S-adenosyl-L-methionine (SAM)-dependent reaction. This chain is Phosphomethylpyrimidine synthase, found in Neisseria meningitidis serogroup B (strain ATCC BAA-335 / MC58).